Here is a 547-residue protein sequence, read N- to C-terminus: CTP synthase (547 aa).

Residues 1-265 (MARFVFITGG…DQAVLDAFSI (265 aa)) are amidoligase domain. Ser-13 lines the CTP pocket. A UTP-binding site is contributed by Ser-13. Residues 14 to 19 (SLGKGL) and Asp-71 contribute to the ATP site. Mg(2+) contacts are provided by Asp-71 and Glu-139. CTP is bound by residues 146–148 (DIE), 186–191 (KTKPTQ), and Lys-222. Residues 186–191 (KTKPTQ) and Lys-222 contribute to the UTP site. The Glutamine amidotransferase type-1 domain occupies 291–546 (NVAIVGKYTQ…VRAAKEVSRL (256 aa)). Gly-353 contributes to the L-glutamine binding site. Cys-380 serves as the catalytic Nucleophile; for glutamine hydrolysis. Residues 381–384 (LGMQ), Glu-404, and Arg-474 each bind L-glutamine. Active-site residues include His-519 and Glu-521.

It belongs to the CTP synthase family. Homotetramer.

It catalyses the reaction UTP + L-glutamine + ATP + H2O = CTP + L-glutamate + ADP + phosphate + 2 H(+). It carries out the reaction L-glutamine + H2O = L-glutamate + NH4(+). The catalysed reaction is UTP + NH4(+) + ATP = CTP + ADP + phosphate + 2 H(+). The protein operates within pyrimidine metabolism; CTP biosynthesis via de novo pathway; CTP from UDP: step 2/2. Its activity is regulated as follows. Allosterically activated by GTP, when glutamine is the substrate; GTP has no effect on the reaction when ammonia is the substrate. The allosteric effector GTP functions by stabilizing the protein conformation that binds the tetrahedral intermediate(s) formed during glutamine hydrolysis. Inhibited by the product CTP, via allosteric rather than competitive inhibition. Its function is as follows. Catalyzes the ATP-dependent amination of UTP to CTP with either L-glutamine or ammonia as the source of nitrogen. Regulates intracellular CTP levels through interactions with the four ribonucleotide triphosphates. This Dinoroseobacter shibae (strain DSM 16493 / NCIMB 14021 / DFL 12) protein is CTP synthase.